A 162-amino-acid chain; its full sequence is ATP synthase subunit delta, mitochondrial (162 aa).

Residues 1 to 25 (MSSLRLLASAARRATTHVAYTRRGY) constitute a mitochondrion transit peptide.

It belongs to the ATPase epsilon chain family. F-type ATPases have 2 components, CF(1) - the catalytic core - and CF(0) - the membrane proton channel. CF(1) has five subunits: alpha(3), beta(3), gamma(1), delta(1), epsilon(1). CF(0) has three main subunits: a, b and c.

The protein resides in the mitochondrion. The protein localises to the mitochondrion inner membrane. Its function is as follows. Mitochondrial membrane ATP synthase (F(1)F(0) ATP synthase or Complex V) produces ATP from ADP in the presence of a proton gradient across the membrane which is generated by electron transport complexes of the respiratory chain. F-type ATPases consist of two structural domains, F(1) - containing the extramembraneous catalytic core, and F(0) - containing the membrane proton channel, linked together by a central stalk and a peripheral stalk. During catalysis, ATP turnover in the catalytic domain of F(1) is coupled via a rotary mechanism of the central stalk subunits to proton translocation. Part of the complex F(1) domain and of the central stalk which is part of the complex rotary element. Rotation of the central stalk against the surrounding alpha(3)beta(3) subunits leads to hydrolysis of ATP in three separate catalytic sites on the beta subunits. This chain is ATP synthase subunit delta, mitochondrial (atpD), found in Agaricus bisporus (White button mushroom).